The sequence spans 257 residues: UPF0246 protein YaaA (257 aa).

This sequence belongs to the UPF0246 family.

This is UPF0246 protein YaaA from Salmonella arizonae (strain ATCC BAA-731 / CDC346-86 / RSK2980).